Here is a 327-residue protein sequence, read N- to C-terminus: Complex I intermediate-associated protein 30, mitochondrial (327 aa).

Residues 1–24 constitute a mitochondrion transit peptide; sequence MALVHKLLRGTYFLRKFSKPTSAL. Positions 42–63 are disordered; the sequence is PVASPGKASSQRKTEGDLQGDH. Over residues 53–63 the composition is skewed to basic and acidic residues; that stretch reads RKTEGDLQGDH. Phosphoserine is present on serine 318.

It belongs to the CIA30 family. As to quaternary structure, part of the mitochondrial complex I assembly/MCIA complex that comprises at least the core subunits TMEM126B, NDUFAF1, ECSIT and ACAD9 and complement subunits such as COA1 and TMEM186. Interacts with ECSIT. Interacts with ACAD9. At early stages of complex I assembly, it is found in intermediate subcomplexes that contain different subunits including NDUFB6, NDUFA6, NDUFA9, NDUFS3, NDUFS7, ND1, ND2 and ND3. Interacts with TMEM70 and TMEM242. As to expression, ubiquitous.

The protein localises to the mitochondrion. It localises to the mitochondrion matrix. Functionally, as part of the MCIA complex, involved in the assembly of the mitochondrial complex I. The protein is Complex I intermediate-associated protein 30, mitochondrial of Homo sapiens (Human).